A 591-amino-acid polypeptide reads, in one-letter code: Probable sulfoacetaldehyde acetyltransferase (591 aa).

Residues 359–383 (MDHEDDDPGTEWNVGARQREPDRMS) form a disordered region.

The protein belongs to the TPP enzyme family. It depends on Mg(2+) as a cofactor. Thiamine diphosphate is required as a cofactor.

The protein resides in the cytoplasm. It catalyses the reaction acetyl phosphate + sulfite + H(+) = sulfoacetaldehyde + phosphate. It participates in organosulfur degradation; taurine degradation via aerobic pathway; acetyl phosphate and sulfite from taurine: step 2/2. The polypeptide is Probable sulfoacetaldehyde acetyltransferase (xsc) (Rhizobium meliloti (strain 1021) (Ensifer meliloti)).